The sequence spans 357 residues: MKVLAALALSALAMAKPTPPMPGMSLVQTGPQETRWVTAKEKHDMVMNHIGFFDITNRPETASIASKPKSYAFPGNVSHQAEVKPLLEKISADHIKANLEKFSSYPNRYYDAQSGVESAQWVMEQAQAVVGNIQGAKVEMVKHDWMQPSIRAIIPGKSEKIVAVGAHQDSINGNNPQGEAPGADDNGSGSMTILEALTALVSDQKIAGGEAANTLEFHWYAGEEEGLLGSQDIFQQYSQEGKEVVAMLNQDMTGYGETMGVITDNSDPNLTKFTKMILDTYTSAKYSDSECGYACSDHASANKAGFPSAFVYEAVVGQDNPAIHSPDDTIEKLDPAKMAEHAKLVVGFAYELAFATL.

A signal peptide spans 1-15 (MKVLAALALSALAMA). Asn76 is a glycosylation site (N-linked (GlcNAc...) asparagine). Positions 167 and 185 each coordinate Zn(2+). A disordered region spans residues 169-188 (DSINGNNPQGEAPGADDNGS). An N-linked (GlcNAc...) asparagine glycan is attached at Asn186. Positions 224 and 251 each coordinate Zn(2+). Asn269 is a glycosylation site (N-linked (GlcNAc...) asparagine). A disulfide bridge links Cys291 with Cys295. His324 provides a ligand contact to Zn(2+).

The protein belongs to the peptidase M28 family. M28E subfamily. Monomer. The cofactor is Zn(2+).

It is found in the secreted. Functionally, probable extracellular aminopeptidase which contributes to pathogenicity. This is Probable leucine aminopeptidase ARB_00576 from Arthroderma benhamiae (strain ATCC MYA-4681 / CBS 112371) (Trichophyton mentagrophytes).